The primary structure comprises 498 residues: Fascin-3 (498 aa).

It belongs to the fascin family. In terms of tissue distribution, expressed in testis.

Its subcellular location is the cytoplasm. The protein localises to the cytoskeleton. Acts as an actin bundling protein. The polypeptide is Fascin-3 (FSCN3) (Homo sapiens (Human)).